The following is a 366-amino-acid chain: DNA polymerase IV (366 aa).

The region spanning 6–197 is the UmuC domain; the sequence is IIHVDMDYFY…LKVSKLWGIG (192 aa). Residues Asp10 and Asp114 each contribute to the Mg(2+) site. Glu115 is a catalytic residue.

Belongs to the DNA polymerase type-Y family. In terms of assembly, monomer. The cofactor is Mg(2+).

Its subcellular location is the cytoplasm. The catalysed reaction is DNA(n) + a 2'-deoxyribonucleoside 5'-triphosphate = DNA(n+1) + diphosphate. Functionally, poorly processive, error-prone DNA polymerase involved in untargeted mutagenesis. Copies undamaged DNA at stalled replication forks, which arise in vivo from mismatched or misaligned primer ends. These misaligned primers can be extended by PolIV. Exhibits no 3'-5' exonuclease (proofreading) activity. May be involved in translesional synthesis. The sequence is that of DNA polymerase IV from Methanosarcina acetivorans (strain ATCC 35395 / DSM 2834 / JCM 12185 / C2A).